Consider the following 68-residue polypeptide: Small ribosomal subunit protein bS21 (68 aa).

Positions 39–68 are disordered; it reads PPSVKRVRKKQESERRHRKERAMRRRMMEE. The span at 54–68 shows a compositional bias: basic residues; sequence RHRKERAMRRRMMEE.

Belongs to the bacterial ribosomal protein bS21 family.

The sequence is that of Small ribosomal subunit protein bS21 from Orientia tsutsugamushi (strain Ikeda) (Rickettsia tsutsugamushi).